Consider the following 168-residue polypeptide: Photosystem I assembly protein Ycf3 (168 aa).

TPR repeat units follow at residues 35–68 (AFTYYRDGMSAQSEGNYAEALQNYYEAMRLEIDP), 72–105 (SYILYNIGLIHTSNGEHTKALEYYFRALERNPFL), and 120–153 (GEQAIQQGDSEIAEAWFDQAAEYWKQAIALTPGN).

It belongs to the Ycf3 family.

It localises to the plastid. It is found in the chloroplast thylakoid membrane. In terms of biological role, essential for the assembly of the photosystem I (PSI) complex. May act as a chaperone-like factor to guide the assembly of the PSI subunits. The protein is Photosystem I assembly protein Ycf3 of Solanum bulbocastanum (Wild potato).